The chain runs to 1048 residues: 3-hydroxy-3-methylglutaryl-coenzyme A reductase (1048 aa).

Residues 1–32 (MDPVVKKPSPGGVQHRVTKGLRAIVGHACRHP) lie on the Cytoplasmic side of the membrane. A helical membrane pass occupies residues 33–53 (IHTLLVTALTAATTHLHVLEG). Topologically, residues 54-220 (TYQAAHRGLA…FLHRVKHAET (167 aa)) are lumenal. A helical transmembrane segment spans residues 221-241 (VDLVIIGLSYLAMNMTVVSLF). Residues 222–403 (DLVIIGLSYL…FTFYATILCV (182 aa)) enclose the SSD domain. Over 242-250 (RVMRQLGSR) the chain is Cytoplasmic. The chain crosses the membrane as a helical span at residues 251–271 (FWLATSVLLSGAFAFVLGLGI). The Lumenal segment spans residues 272-276 (TTTCD). Residues 277–297 (VPVDMLLLFEGIPYLVLTVGF) form a helical membrane-spanning segment. Residues 298–348 (EKPIQLTRAVLCVSEELRGGWQRPVPNGASSDDSRQSQLIPNIIQLAVDRE) lie on the Cytoplasmic side of the membrane. A helical membrane pass occupies residues 349-369 (GWYIVRSYLLEIGALALGAVL). Residues 370-377 (RPNDSLGH) lie on the Lumenal side of the membrane. Asn-372 carries N-linked (GlcNAc...) asparagine glycosylation. The helical transmembrane segment at 378 to 398 (FCFLAAWTLLIDAILLFTFYA) threads the bilayer. The Cytoplasmic segment spans residues 399–439 (TILCVKLEITRIRSPGGLGQVNAKHPSGIFGHKVKSTNITW). A helical transmembrane segment spans residues 440-460 (WKLLTVGGFVLCHFLQLSPFF). Residues 461–542 (YRVMGEYMAN…LDGLESPLGR (82 aa)) are Lumenal-facing. Residues Asn-470 and Asn-520 are each glycosylated (N-linked (GlcNAc...) asparagine). Residues 543 to 563 (LCLMGALVVSLVLNNHLIHAA) form a helical membrane-spanning segment. Topologically, residues 564-1048 (RWHAWPQARE…NRSAGATVKK (485 aa)) are cytoplasmic. Glu-729 (charge relay system) is an active-site residue. 735–741 (SASRGCK) contributes to the CoA binding site. NADP(+)-binding positions include 796-798 (SRF) and 823-831 (DAMGMNMIS). Catalysis depends on Lys-863, which acts as the Charge relay system. 892-894 (VLK) lines the CoA pocket. The active-site Charge relay system is the Asp-939. Position 1034-1035 (1034-1035 (AH)) interacts with CoA. Residue His-1035 is the Proton donor of the active site. 1039-1040 (NR) is an NADP(+) binding site.

The protein belongs to the HMG-CoA reductase family.

The protein localises to the endoplasmic reticulum membrane. The catalysed reaction is (R)-mevalonate + 2 NADP(+) + CoA = (3S)-3-hydroxy-3-methylglutaryl-CoA + 2 NADPH + 2 H(+). Its pathway is metabolic intermediate biosynthesis; (R)-mevalonate biosynthesis; (R)-mevalonate from acetyl-CoA: step 3/3. Its function is as follows. HMG-CoA reductase; part of the first module of ergosterol biosynthesis pathway that includes the early steps of the pathway, conserved across all eukaryotes, and which results in the formation of mevalonate from acetyl-coenzyme A (acetyl-CoA). In this module, the cytosolic acetyl-CoA acetyltransferase catalyzes the formation of acetoacetyl-CoA. The hydroxymethylglutaryl-CoA synthase then condenses acetyl-CoA with acetoacetyl-CoA to form HMG-CoA. The rate-limiting step of the early module is the reduction to mevalonate by the 3-hydroxy-3-methylglutaryl-coenzyme A (HMG-CoA) reductase. This is 3-hydroxy-3-methylglutaryl-coenzyme A reductase from Aspergillus terreus (strain NIH 2624 / FGSC A1156).